Here is a 269-residue protein sequence, read N- to C-terminus: Small ribosomal subunit protein uS2 (269 aa).

Positions 224 to 269 (ANQGREDSEDVYSETENDTEETDEELVSEEDLKEFVENSEEESDEE) are disordered. The span at 230–269 (DSEDVYSETENDTEETDEELVSEEDLKEFVENSEEESDEE) shows a compositional bias: acidic residues.

It belongs to the universal ribosomal protein uS2 family.

The polypeptide is Small ribosomal subunit protein uS2 (Finegoldia magna (strain ATCC 29328 / DSM 20472 / WAL 2508) (Peptostreptococcus magnus)).